A 304-amino-acid chain; its full sequence is Urease accessory protein UreD (304 aa).

Belongs to the UreD family. UreD, UreF and UreG form a complex that acts as a GTP-hydrolysis-dependent molecular chaperone, activating the urease apoprotein by helping to assemble the nickel containing metallocenter of UreC. The UreE protein probably delivers the nickel.

The protein localises to the cytoplasm. Required for maturation of urease via the functional incorporation of the urease nickel metallocenter. This Haloquadratum walsbyi (strain DSM 16790 / HBSQ001) protein is Urease accessory protein UreD.